We begin with the raw amino-acid sequence, 224 residues long: Urease accessory protein UreF (224 aa).

The protein belongs to the UreF family. In terms of assembly, ureD, UreF and UreG form a complex that acts as a GTP-hydrolysis-dependent molecular chaperone, activating the urease apoprotein by helping to assemble the nickel containing metallocenter of UreC. The UreE protein probably delivers the nickel.

It is found in the cytoplasm. Functionally, required for maturation of urease via the functional incorporation of the urease nickel metallocenter. This Klebsiella pneumoniae subsp. pneumoniae (strain ATCC 700721 / MGH 78578) protein is Urease accessory protein UreF.